We begin with the raw amino-acid sequence, 736 residues long: Catalase-peroxidase (736 aa).

The interval 1–30 is disordered; that stretch reads MGGNVMTDDKMNSVTSGANKQETGRDMSNR. The span at 12-21 shows a compositional bias: polar residues; sequence NSVTSGANKQ. The segment at residues 101-224 is a cross-link (tryptophyl-tyrosyl-methioninium (Trp-Tyr) (with M-250)); the sequence is WHSAGTYRAG…LAAVQMGLIY (124 aa). Residue H102 is the Proton acceptor of the active site. Residues 224–250 constitute a cross-link (tryptophyl-tyrosyl-methioninium (Tyr-Met) (with W-101)); it reads YVNPEGPNGNPDPIAAAKDIREVFARM. H265 is a binding site for heme b. Residues 351–373 form a disordered region; sequence KGGAGAGTIPDAHDPSKRHAPSM.

It belongs to the peroxidase family. Peroxidase/catalase subfamily. Homodimer or homotetramer. It depends on heme b as a cofactor. In terms of processing, formation of the three residue Trp-Tyr-Met cross-link is important for the catalase, but not the peroxidase activity of the enzyme.

It carries out the reaction H2O2 + AH2 = A + 2 H2O. It catalyses the reaction 2 H2O2 = O2 + 2 H2O. Functionally, bifunctional enzyme with both catalase and broad-spectrum peroxidase activity. The protein is Catalase-peroxidase of Methanosarcina acetivorans (strain ATCC 35395 / DSM 2834 / JCM 12185 / C2A).